The following is a 382-amino-acid chain: Galactokinase (382 aa).

34 to 37 contacts substrate; the sequence is EHTD. An ATP-binding site is contributed by 124–130; that stretch reads GAGLSSS. Positions 130 and 162 each coordinate Mg(2+). The active-site Proton acceptor is the Asp-174. Tyr-223 contributes to the substrate binding site.

The protein belongs to the GHMP kinase family. GalK subfamily.

The protein localises to the cytoplasm. The enzyme catalyses alpha-D-galactose + ATP = alpha-D-galactose 1-phosphate + ADP + H(+). Its pathway is carbohydrate metabolism; galactose metabolism. In terms of biological role, catalyzes the transfer of the gamma-phosphate of ATP to D-galactose to form alpha-D-galactose-1-phosphate (Gal-1-P). The polypeptide is Galactokinase (Escherichia coli O81 (strain ED1a)).